Reading from the N-terminus, the 128-residue chain is Holo-[acyl-carrier-protein] synthase (128 aa).

Residues Asp8 and Glu58 each coordinate Mg(2+).

This sequence belongs to the P-Pant transferase superfamily. AcpS family. It depends on Mg(2+) as a cofactor.

The protein resides in the cytoplasm. It carries out the reaction apo-[ACP] + CoA = holo-[ACP] + adenosine 3',5'-bisphosphate + H(+). Functionally, transfers the 4'-phosphopantetheine moiety from coenzyme A to a Ser of acyl-carrier-protein. This chain is Holo-[acyl-carrier-protein] synthase, found in Exiguobacterium sibiricum (strain DSM 17290 / CCUG 55495 / CIP 109462 / JCM 13490 / 255-15).